A 997-amino-acid polypeptide reads, in one-letter code: Protein translocase subunit SecA (997 aa).

Residues Gln84, 102–106 (GEGKT), and Asp582 contribute to the ATP site. The disordered stretch occupies residues 950 to 997 (PYVPVPEAKPEPSEVFGVERKRATPPPQPGLSRAERRRLMRQEKKRKK). The span at 957–971 (AKPEPSEVFGVERKR) shows a compositional bias: basic and acidic residues. Over residues 984–997 (ERRRLMRQEKKRKK) the composition is skewed to basic residues.

It belongs to the SecA family. In terms of assembly, part of the essential Sec protein translocation apparatus which comprises SecA, SecYEG and auxiliary proteins SecDF. Other proteins may also be involved. Monomer and homodimer.

The protein localises to the cell inner membrane. It is found in the cytoplasm. The enzyme catalyses ATP + H2O + cellular proteinSide 1 = ADP + phosphate + cellular proteinSide 2.. Its function is as follows. Part of the Sec protein translocase complex. Interacts with the SecYEG preprotein conducting channel. Has a central role in coupling the hydrolysis of ATP to the transfer of proteins into and across the cell membrane, serving as an ATP-driven molecular motor driving the stepwise translocation of polypeptide chains across the membrane. The protein is Protein translocase subunit SecA of Thermus thermophilus (strain ATCC 27634 / DSM 579 / HB8).